We begin with the raw amino-acid sequence, 157 residues long: Probable cyclic pyranopterin monophosphate synthase (157 aa).

Substrate-binding positions include 75–77 (MCH) and 111–112 (ME). The active site involves Asp-126.

The protein belongs to the MoaC family. Homohexamer; trimer of dimers.

The catalysed reaction is (8S)-3',8-cyclo-7,8-dihydroguanosine 5'-triphosphate = cyclic pyranopterin phosphate + diphosphate. Its pathway is cofactor biosynthesis; molybdopterin biosynthesis. In terms of biological role, catalyzes the conversion of (8S)-3',8-cyclo-7,8-dihydroguanosine 5'-triphosphate to cyclic pyranopterin monophosphate (cPMP). This chain is Probable cyclic pyranopterin monophosphate synthase, found in Methanosarcina mazei (strain ATCC BAA-159 / DSM 3647 / Goe1 / Go1 / JCM 11833 / OCM 88) (Methanosarcina frisia).